Here is a 199-residue protein sequence, read N- to C-terminus: Large ribosomal subunit protein eL13A (199 aa).

Phosphothreonine is present on residues threonine 144 and threonine 152.

The protein belongs to the eukaryotic ribosomal protein eL13 family. In terms of assembly, component of the large ribosomal subunit (LSU). Mature yeast ribosomes consist of a small (40S) and a large (60S) subunit. The 40S small subunit contains 1 molecule of ribosomal RNA (18S rRNA) and 33 different proteins (encoded by 57 genes). The large 60S subunit contains 3 rRNA molecules (25S, 5.8S and 5S rRNA) and 46 different proteins (encoded by 81 genes).

It is found in the cytoplasm. Component of the ribosome, a large ribonucleoprotein complex responsible for the synthesis of proteins in the cell. The small ribosomal subunit (SSU) binds messenger RNAs (mRNAs) and translates the encoded message by selecting cognate aminoacyl-transfer RNA (tRNA) molecules. The large subunit (LSU) contains the ribosomal catalytic site termed the peptidyl transferase center (PTC), which catalyzes the formation of peptide bonds, thereby polymerizing the amino acids delivered by tRNAs into a polypeptide chain. The nascent polypeptides leave the ribosome through a tunnel in the LSU and interact with protein factors that function in enzymatic processing, targeting, and the membrane insertion of nascent chains at the exit of the ribosomal tunnel. The sequence is that of Large ribosomal subunit protein eL13A from Saccharomyces cerevisiae (strain ATCC 204508 / S288c) (Baker's yeast).